The following is a 662-amino-acid chain: 72 kDa type IV collagenase (662 aa).

A signal peptide spans 1–29; that stretch reads MEARVAWGALAGPLRVLCVLCCLLGRAIA. A propeptide spans 30–109 (activation peptide); the sequence is APSPIIKFPG…PRCGNPDVAN (80 aa). The Cysteine switch motif lies at 100-107; sequence PRCGNPDV. A Zn(2+)-binding site is contributed by cysteine 102. The collagenase-like 1 stretch occupies residues 110–221; it reads YNFFPRKPKW…LWTLGEGQVV (112 aa). Positions 134 and 168 each coordinate Ca(2+). The Zn(2+) site is built by histidine 178 and aspartate 180. Residues aspartate 185 and glycine 186 each contribute to the Ca(2+) site. Histidine 193 is a binding site for Zn(2+). 3 residues coordinate Ca(2+): glycine 200, glycine 202, and aspartate 204. Zn(2+) is bound at residue histidine 206. Residues aspartate 208, aspartate 209, and glutamate 211 each coordinate Ca(2+). The tract at residues 222–396 is collagen-binding; sequence RVKYGNADGE…WGFCPDQGYS (175 aa). Fibronectin type-II domains lie at 228-276, 286-334, and 344-392; these read ADGE…FCPH, ADGQ…FCPE, and SEGA…FCPD. 6 cysteine pairs are disulfide-bonded: cysteine 233–cysteine 259, cysteine 247–cysteine 274, cysteine 291–cysteine 317, cysteine 305–cysteine 332, cysteine 349–cysteine 375, and cysteine 363–cysteine 390. A collagenase-like 2 region spans residues 397–467; it reads LFLVAAHEFG…GPTPTLGPVT (71 aa). Histidine 403 is a binding site for Zn(2+). Residue glutamate 404 is part of the active site. Zn(2+) contacts are provided by histidine 407 and histidine 413. The interval 414–662 is required for inhibitor TIMP2 binding; sequence SQDPGALMAP…GSIKSDWLGC (249 aa). The tract at residues 446-465 is disordered; the sequence is GPSPDADTDTGTGPTPTLGP. Cysteine 471 and cysteine 662 form a disulfide bridge. 4 Hemopexin repeats span residues 474–518, 519–565, 567–615, and 616–662; these read DIVF…WPEL, PEKI…GLPP, VQQV…WNAI, and PDNL…WLGC. Residues aspartate 478, aspartate 523, and aspartate 571 each contribute to the Ca(2+) site. N-linked (GlcNAc...) asparagine glycosylation is present at asparagine 575. Aspartate 620 contributes to the Ca(2+) binding site. Asparagine 644 carries N-linked (GlcNAc...) asparagine glycosylation.

It belongs to the peptidase M10A family. In terms of assembly, interacts (via the C-terminal hemopexin-like domains-containing region) with the integrin alpha-V/beta-3; the interaction promotes vascular invasion in angiogenic vessels and melamoma cells. Interacts (via the C-terminal PEX domain) with TIMP2 (via the C-terminal); the interaction inhibits the degradation activity. Interacts with GSK3B. Requires Ca(2+) as cofactor. Zn(2+) is required as a cofactor. Phosphorylation on multiple sites modulates enzymatic activity. Phosphorylated by PKC in vitro. In terms of processing, the propeptide is processed by MMP14 (MT-MMP1) and MMP16 (MT-MMP3). Autocatalytic cleavage in the C-terminal produces the anti-angiogenic peptide, PEX. This processing appears to be facilitated by binding integrinv/beta3.

It localises to the secreted. The protein localises to the extracellular space. It is found in the extracellular matrix. The protein resides in the membrane. Its subcellular location is the nucleus. It localises to the cytoplasm. The protein localises to the mitochondrion. It carries out the reaction Cleavage of gelatin type I and collagen types IV, V, VII, X. Cleaves the collagen-like sequence Pro-Gln-Gly-|-Ile-Ala-Gly-Gln.. Ubiquitinous metalloproteinase that is involved in diverse functions such as remodeling of the vasculature, angiogenesis, tissue repair, tumor invasion, inflammation, and atherosclerotic plaque rupture. As well as degrading extracellular matrix proteins, can also act on several nonmatrix proteins such as big endothelial 1 and beta-type CGRP promoting vasoconstriction. Also cleaves KISS at a Gly-|-Leu bond. Appears to have a role in myocardial cell death pathways. Contributes to myocardial oxidative stress by regulating the activity of GSK3beta. Cleaves GSK3beta in vitro. Involved in the formation of the fibrovascular tissues. Its function is as follows. PEX, the C-terminal non-catalytic fragment of MMP2, possesses anti-angiogenic and anti-tumor properties and inhibits cell migration and cell adhesion to FGF2 and vitronectin. Ligand for integrin alpha-v/beta-3 on the surface of blood vessels. Functionally, mediates the proteolysis of CHUK/IKKA and initiates a primary innate immune response by inducing mitochondrial-nuclear stress signaling with activation of the pro-inflammatory NF-kappaB, NFAT and IRF transcriptional pathways. This Mus musculus (Mouse) protein is 72 kDa type IV collagenase (Mmp2).